Consider the following 198-residue polypeptide: Recombination protein RecR (198 aa).

The segment at 57 to 72 (CSLCGNLDTVDPCHIC) adopts a C4-type zinc-finger fold. The 96-residue stretch at 80–175 (GLICVVETVG…TVTRVGHGVP (96 aa)) folds into the Toprim domain.

Belongs to the RecR family.

Functionally, may play a role in DNA repair. It seems to be involved in an RecBC-independent recombinational process of DNA repair. It may act with RecF and RecO. The protein is Recombination protein RecR of Gluconobacter oxydans (strain 621H) (Gluconobacter suboxydans).